The primary structure comprises 609 residues: Chloride channel CLIC-like protein 1 (609 aa).

Positions 1–25 (MKLSSSSSFGLCILVVFFCFVVIES) are cleaved as a signal peptide. 3 helical membrane-spanning segments follow: residues 212–235 (VSLI…SWFV), 241–260 (FAVS…YMLA), and 358–380 (VTLQ…YGSA). The interval 398–553 (EQPPPAVGQR…PSSIDVKTVG (156 aa)) is disordered. Basic and acidic residues-rich tracts occupy residues 454 to 474 (ENRE…KRTP) and 507 to 537 (EEVK…DRSE). Over residues 538–547 (PITSEPPSSI) the composition is skewed to low complexity.

It belongs to the chloride channel MCLC family. Expressed in the hindbrain, swim bladder and the eye at 1 day post fertilization (dpf) with increased expression at 3 dpf. At 3 dpf, most prominent expression in the retina, with strong expression in the ganglion cell layer, outer nuclear layer and the retinal pigmented epithelium.

It localises to the endoplasmic reticulum membrane. The protein localises to the golgi apparatus membrane. Its subcellular location is the nucleus membrane. Functionally, seems to act as a chloride ion channel. Plays a role in retina development. This Danio rerio (Zebrafish) protein is Chloride channel CLIC-like protein 1.